A 196-amino-acid polypeptide reads, in one-letter code: MFCEKAMELVRELHRAAEGRLPAFNEDGLRQVLEEMKALYEQNQSDVNEAKSSGRGDLIPTIKFRHCSLLRNQRCTVAYLYDRLLRIRALRWEYGSVLPSALRFHMSAEEMDWFNRYKKSLATYMRSLGGDEGLDITQDMKPPKSLYIEVRCLKDYGEFEVEDGTSVLLKKNSQHFLPRWKCEQLIRQGILEHVLS.

Belongs to the GINS1/PSF1 family. Component of the GINS complex which is a heterotetramer of GINS1, GINS2, GINS3 and GINS4. Forms a stable subcomplex with GINS4. GINS complex interacts with DNA primase in vitro. Component of the CMG helicase complex, a hexameric ring of related MCM2-7 subunits stabilized by CDC45 and the tetrameric GINS complex.

The protein resides in the nucleus. The protein localises to the chromosome. In terms of biological role, required for correct functioning of the GINS complex, a complex that plays an essential role in the initiation of DNA replication, and progression of DNA replication forks. GINS complex is a core component of CDC45-MCM-GINS (CMG) helicase, the molecular machine that unwinds template DNA during replication, and around which the replisome is built. The protein is DNA replication complex GINS protein PSF1 (GINS1) of Bos taurus (Bovine).